Here is a 124-residue protein sequence, read N- to C-terminus: Large ribosomal subunit protein bL12 (124 aa).

Belongs to the bacterial ribosomal protein bL12 family. In terms of assembly, homodimer. Part of the ribosomal stalk of the 50S ribosomal subunit. Forms a multimeric L10(L12)X complex, where L10 forms an elongated spine to which 2 to 4 L12 dimers bind in a sequential fashion. Binds GTP-bound translation factors.

Forms part of the ribosomal stalk which helps the ribosome interact with GTP-bound translation factors. Is thus essential for accurate translation. The sequence is that of Large ribosomal subunit protein bL12 from Phocaeicola vulgatus (strain ATCC 8482 / DSM 1447 / JCM 5826 / CCUG 4940 / NBRC 14291 / NCTC 11154) (Bacteroides vulgatus).